The following is a 61-amino-acid chain: Metallothionein-II, hippocampal (61 aa).

The residue at position 1 (Met-1) is an N-acetylmethionine. Residues 1 to 29 (MDPNCSCATGGSCTCANSCTCKACKCASC) are beta. A divalent metal cation contacts are provided by Cys-5, Cys-7, Cys-13, Cys-15, Cys-19, Cys-21, Cys-24, Cys-26, Cys-29, Cys-33, Cys-34, Cys-36, Cys-37, Cys-41, Cys-44, Cys-48, Cys-50, Cys-57, Cys-59, and Cys-60. Residues 30 to 61 (KKSCCSCCPVGCAKCAQGCICKGASDKCSCCA) are alpha.

This sequence belongs to the metallothionein superfamily. Type 1 family.

In terms of biological role, metallothioneins have a high content of cysteine residues that bind various heavy metals; these proteins are transcriptionally regulated by both heavy metals and glucocorticoids. This isoform may play a role in regulating the transport, accumulation, and compartmentation of zinc in the hippocampus. This Bos taurus (Bovine) protein is Metallothionein-II, hippocampal.